A 68-amino-acid polypeptide reads, in one-letter code: Protein transport protein Sec61 subunit gamma (68 aa).

The residue at position 1 (Met-1) is an N-acetylmethionine. Residues 1-32 (MDQVMQFVEPSRQFVKDSIRLVKRCTKPDRKE) are Cytoplasmic-facing. Ser-18 is subject to Phosphoserine. Residues 33-61 (FQKIAMATAIGFAIMGFIGFFVKLIHIPI) form a helical membrane-spanning segment. The Extracellular segment spans residues 62–68 (NNIIVGG).

The protein belongs to the SecE/SEC61-gamma family. As to quaternary structure, the SEC61 channel-forming translocon complex consists of channel-forming core components SEC61A1, SEC61B and SEC61G and different auxiliary components such as SEC62 and SEC63. The SEC61 channel associates with the multi-pass translocon (MPT) complex.

It localises to the endoplasmic reticulum membrane. Functionally, component of SEC61 channel-forming translocon complex that mediates transport of signal peptide-containing precursor polypeptides across the endoplasmic reticulum (ER). Forms a ribosome receptor and a gated pore in the ER membrane, both functions required for cotranslational translocation of nascent polypeptides. The SEC61 channel is also involved in ER membrane insertion of transmembrane proteins: it mediates membrane insertion of the first few transmembrane segments of proteins, while insertion of subsequent transmembrane regions of multi-pass membrane proteins is mediated by the multi-pass translocon (MPT) complex. The SEC61 channel cooperates with the translocating protein TRAM1 to import nascent proteins into the ER. This chain is Protein transport protein Sec61 subunit gamma (SEC61G), found in Bos taurus (Bovine).